A 407-amino-acid polypeptide reads, in one-letter code: Imidazolonepropionase (407 aa).

Fe(3+) contacts are provided by H68 and H70. Zn(2+)-binding residues include H68 and H70. 4-imidazolone-5-propanoate is bound by residues R77, Y140, and H173. Y140 serves as a coordination point for N-formimidoyl-L-glutamate. H238 is a binding site for Fe(3+). H238 provides a ligand contact to Zn(2+). Q241 serves as a coordination point for 4-imidazolone-5-propanoate. A Fe(3+)-binding site is contributed by D313. D313 lines the Zn(2+) pocket. Residues N315 and G317 each coordinate N-formimidoyl-L-glutamate. T318 serves as a coordination point for 4-imidazolone-5-propanoate.

It belongs to the metallo-dependent hydrolases superfamily. HutI family. Zn(2+) serves as cofactor. Requires Fe(3+) as cofactor.

The protein resides in the cytoplasm. The catalysed reaction is 4-imidazolone-5-propanoate + H2O = N-formimidoyl-L-glutamate. It functions in the pathway amino-acid degradation; L-histidine degradation into L-glutamate; N-formimidoyl-L-glutamate from L-histidine: step 3/3. Catalyzes the hydrolytic cleavage of the carbon-nitrogen bond in imidazolone-5-propanoate to yield N-formimidoyl-L-glutamate. It is the third step in the universal histidine degradation pathway. This chain is Imidazolonepropionase, found in Burkholderia pseudomallei (strain 668).